A 417-amino-acid chain; its full sequence is Phosphoglycerate kinase 1 (417 aa).

Position 2 is an N-acetylserine (Ser-2). 2 positions are modified to phosphoserine: Ser-2 and Ser-4. N6-succinyllysine is present on Lys-6. Lys-11 carries the N6-acetyllysine modification. Residues Val-23, Asp-24, Phe-25, Asn-26, Gln-38, and Arg-39 each coordinate (2R)-3-phosphoglycerate. The interval Gln-38–Ala-43 is mitochondrial targeting region exposed following cis-trans isomerization by PIN1 and recognized by the TOM complex for mitochondrial translocation of the protein. Residue Lys-48 is modified to N6-acetyllysine; alternate. Lys-48 bears the N6-succinyllysine; alternate mark. Positions 62, 63, 65, and 66 each coordinate (2R)-3-phosphoglycerate. At Lys-75 the chain carries N6-acetyllysine. Tyr-76 is subject to Phosphotyrosine. N6-acetyllysine occurs at positions 86 and 91. At Lys-97 the chain carries N6-acetyllysine; alternate. Lys-97 bears the N6-(2-hydroxyisobutyryl)lysine; alternate mark. The (2R)-3-phosphoglycerate site is built by Leu-122 and Arg-123. Residue Lys-131 is modified to N6-acetyllysine; alternate. Lys-131 is modified (N6-malonyllysine; alternate). Residue Lys-146 is modified to N6-acetyllysine. (2R)-3-phosphoglycerate contacts are provided by His-170 and Arg-171. Position 191 is an N6-succinyllysine (Lys-191). Tyr-196 bears the Phosphotyrosine mark. N6-acetyllysine is present on Lys-199. The residue at position 203 (Ser-203) is a Phosphoserine. Gly-214 contributes to the ADP binding site. Gly-214 lines the CDP pocket. AMP-binding residues include Ala-215 and Lys-216. Ala-215 is a binding site for ATP. Ala-215 lines the Mg(2+) pocket. Lys-216 carries the N6-(2-hydroxyisobutyryl)lysine modification. Residues Ala-218 and Asp-219 each contribute to the Mg(2+) site. Asp-219 serves as a coordination point for CDP. Lys-220 contributes to the AMP binding site. Lys-220 is an ATP binding site. The residue at position 220 (Lys-220) is an N6-(2-hydroxyisobutyryl)lysine. ADP is bound at residue Gly-238. Position 238 (Gly-238) interacts with CDP. Residue Gly-239 participates in AMP binding. ATP is bound at residue Gly-239. An N6-acetyllysine mark is found at Lys-267 and Lys-291. Gly-313 contacts AMP. Residue Gly-313 participates in ATP binding. At Lys-323 the chain carries N6-(2-hydroxyisobutyryl)lysine. CDP is bound by residues Gly-338, Val-340, and Phe-343. Residue Phe-343 participates in ADP binding. Residue Glu-344 participates in AMP binding. An ATP-binding site is contributed by Glu-344. Ser-354 is modified (phosphoserine). Lys-361 carries the N6-acetyllysine modification. The ATP site is built by Asp-375 and Thr-376. Residue Asp-375 coordinates Mg(2+).

This sequence belongs to the phosphoglycerate kinase family. In terms of assembly, monomer. Interacts with kinase MAPK1/ERK2; the interaction is direct, occurs under hypoxic conditions, and promotes its interaction with PIN1. Interacts with peptidyl-prolyl cis-trans isomerase PIN1; the interaction is direct, occurs under hypoxic conditions, and targets the protein to the mitochondrion by promoting interactions with the TOM complex. Interacts with mitochondrial circRNA mcPGK1 (via its 2nd stem-loop); the interaction is direct and targets the protein to the mitochondrion by promoting interactions with the TOM complex. Interacts with pyruvate dehydrogenase kinase PDK1; the interaction is direct, occurs under hypoxic conditions and leads to PDK1-mediated inhibition of pyruvate dehydrogenase complex activity. Requires Mg(2+) as cofactor. Post-translationally, phosphorylated at Ser-203 by MAPK1/ERK2 under hypoxic conditions, which promotes its mitochondrial targeting.

Its subcellular location is the cytoplasm. It is found in the cytosol. The protein localises to the mitochondrion matrix. It catalyses the reaction (2R)-3-phosphoglycerate + ATP = (2R)-3-phospho-glyceroyl phosphate + ADP. The catalysed reaction is L-seryl-[protein] + ATP = O-phospho-L-seryl-[protein] + ADP + H(+). It participates in carbohydrate degradation; glycolysis; pyruvate from D-glyceraldehyde 3-phosphate: step 2/5. Functionally, catalyzes one of the two ATP producing reactions in the glycolytic pathway via the reversible conversion of 1,3-diphosphoglycerate to 3-phosphoglycerate. Both L- and D- forms of purine and pyrimidine nucleotides can be used as substrates, but the activity is much lower on pyrimidines. In addition to its role as a glycolytic enzyme, it seems that PGK-1 acts as a polymerase alpha cofactor protein (primer recognition protein). Acts as a protein kinase when localized to the mitochondrion where it phosphorylates pyruvate dehydrogenase kinase PDK1 to inhibit pyruvate dehydrogenase complex activity and suppress the formation of acetyl-coenzyme A from pyruvate, and consequently inhibit oxidative phosphorylation and promote glycolysis. May play a role in sperm motility. This chain is Phosphoglycerate kinase 1 (Pgk1), found in Rattus norvegicus (Rat).